Consider the following 134-residue polypeptide: ATP synthase epsilon chain (134 aa).

Residues 94 to 104 are compositionally biased toward basic and acidic residues; that stretch reads AKLAKSRAESH. The tract at residues 94–115 is disordered; the sequence is AKLAKSRAESHLEDDDDNTDIN.

This sequence belongs to the ATPase epsilon chain family. In terms of assembly, F-type ATPases have 2 components, CF(1) - the catalytic core - and CF(0) - the membrane proton channel. CF(1) has five subunits: alpha(3), beta(3), gamma(1), delta(1), epsilon(1). CF(0) has three main subunits: a, b and c.

Its subcellular location is the cell membrane. Functionally, produces ATP from ADP in the presence of a proton gradient across the membrane. In Staphylococcus epidermidis (strain ATCC 12228 / FDA PCI 1200), this protein is ATP synthase epsilon chain.